Here is a 308-residue protein sequence, read N- to C-terminus: Inosose dehydratase (308 aa).

Belongs to the IolE/MocC family. Requires glutathione as cofactor. Co(2+) is required as a cofactor. Mn(2+) serves as cofactor.

The enzyme catalyses scyllo-inosose = 3D-3,5/4-trihydroxycyclohexane-1,2-dione + H2O. It participates in polyol metabolism; myo-inositol degradation into acetyl-CoA; acetyl-CoA from myo-inositol: step 2/7. Functionally, catalyzes the dehydration of inosose (2-keto-myo-inositol, 2KMI or 2,4,6/3,5-pentahydroxycyclohexanone) to 3D-(3,5/4)-trihydroxycyclohexane-1,2-dione (D-2,3-diketo-4-deoxy-epi-inositol). In Geobacillus kaustophilus (strain HTA426), this protein is Inosose dehydratase.